The primary structure comprises 297 residues: Phosphatidylserine decarboxylase proenzyme (297 aa).

Active-site charge relay system; for autoendoproteolytic cleavage activity residues include D92, H149, and S254. S254 acts as the Schiff-base intermediate with substrate; via pyruvic acid; for decarboxylase activity in catalysis. S254 is modified (pyruvic acid (Ser); by autocatalysis).

This sequence belongs to the phosphatidylserine decarboxylase family. PSD-B subfamily. Prokaryotic type I sub-subfamily. As to quaternary structure, heterodimer of a large membrane-associated beta subunit and a small pyruvoyl-containing alpha subunit. Pyruvate is required as a cofactor. Post-translationally, is synthesized initially as an inactive proenzyme. Formation of the active enzyme involves a self-maturation process in which the active site pyruvoyl group is generated from an internal serine residue via an autocatalytic post-translational modification. Two non-identical subunits are generated from the proenzyme in this reaction, and the pyruvate is formed at the N-terminus of the alpha chain, which is derived from the carboxyl end of the proenzyme. The autoendoproteolytic cleavage occurs by a canonical serine protease mechanism, in which the side chain hydroxyl group of the serine supplies its oxygen atom to form the C-terminus of the beta chain, while the remainder of the serine residue undergoes an oxidative deamination to produce ammonia and the pyruvoyl prosthetic group on the alpha chain. During this reaction, the Ser that is part of the protease active site of the proenzyme becomes the pyruvoyl prosthetic group, which constitutes an essential element of the active site of the mature decarboxylase.

It localises to the cell membrane. The enzyme catalyses a 1,2-diacyl-sn-glycero-3-phospho-L-serine + H(+) = a 1,2-diacyl-sn-glycero-3-phosphoethanolamine + CO2. It participates in phospholipid metabolism; phosphatidylethanolamine biosynthesis; phosphatidylethanolamine from CDP-diacylglycerol: step 2/2. Functionally, catalyzes the formation of phosphatidylethanolamine (PtdEtn) from phosphatidylserine (PtdSer). The chain is Phosphatidylserine decarboxylase proenzyme from Bordetella parapertussis (strain 12822 / ATCC BAA-587 / NCTC 13253).